A 79-amino-acid chain; its full sequence is Acyl carrier protein (79 aa).

The 76-residue stretch at 2–77 folds into the Carrier domain; it reads SDIEARVKKI…NAVDYATKNQ (76 aa). Residue serine 37 is modified to O-(pantetheine 4'-phosphoryl)serine.

The protein belongs to the acyl carrier protein (ACP) family. 4'-phosphopantetheine is transferred from CoA to a specific serine of apo-ACP by AcpS. This modification is essential for activity because fatty acids are bound in thioester linkage to the sulfhydryl of the prosthetic group.

The protein resides in the cytoplasm. Its pathway is lipid metabolism; fatty acid biosynthesis. Carrier of the growing fatty acid chain in fatty acid biosynthesis. This chain is Acyl carrier protein, found in Variovorax paradoxus (strain S110).